Here is a 136-residue protein sequence, read N- to C-terminus: MLACFPCFLRRKMPCLLKVADAGCSVGLGKVHCSCHLPNPRVLRHCDILTGVLTLGLDMSCHACLSAGTGLGEELVGLGPGSTCLVKHLWLLFPCHRLASQNYSDSLAQQWSFSLLIMWLCNREREIFMSKCAKCI.

In terms of tissue distribution, widely expressed.

This is an uncharacterized protein from Homo sapiens (Human).